The following is a 210-amino-acid chain: 7-carboxy-7-deazaguanine synthase (210 aa).

Substrate-binding positions include I25–G27 and R40. The region spanning H31–P210 is the Radical SAM core domain. 3 residues coordinate [4Fe-4S] cluster: C44, C48, and C51. T84 provides a ligand contact to substrate. S-adenosyl-L-methionine contacts are provided by residues G86 and S127 to K129. Residue P210 coordinates substrate.

It belongs to the radical SAM superfamily. 7-carboxy-7-deazaguanine synthase family. As to quaternary structure, homodimer. Requires [4Fe-4S] cluster as cofactor. It depends on S-adenosyl-L-methionine as a cofactor. Mg(2+) serves as cofactor.

The enzyme catalyses 6-carboxy-5,6,7,8-tetrahydropterin + H(+) = 7-carboxy-7-deazaguanine + NH4(+). It participates in purine metabolism; 7-cyano-7-deazaguanine biosynthesis. Catalyzes the complex heterocyclic radical-mediated conversion of 6-carboxy-5,6,7,8-tetrahydropterin (CPH4) to 7-carboxy-7-deazaguanine (CDG), a step common to the biosynthetic pathways of all 7-deazapurine-containing compounds. This Flavobacterium psychrophilum (strain ATCC 49511 / DSM 21280 / CIP 103535 / JIP02/86) protein is 7-carboxy-7-deazaguanine synthase.